The sequence spans 228 residues: Cytidylate kinase (228 aa).

12–20 (GPSGSGKGT) provides a ligand contact to ATP.

Belongs to the cytidylate kinase family. Type 1 subfamily.

The protein localises to the cytoplasm. It catalyses the reaction CMP + ATP = CDP + ADP. The catalysed reaction is dCMP + ATP = dCDP + ADP. This chain is Cytidylate kinase, found in Pseudomonas entomophila (strain L48).